A 282-amino-acid polypeptide reads, in one-letter code: Secretory carrier-associated membrane protein 3 (282 aa).

The interval 1-36 is disordered; sequence MAGKHGRNGFEDDDVNPFAGGSVPPANNSRLPPLSH. At 1-117 the chain is on the cytoplasmic side; the sequence is MAGKHGRNGF…EIPIHLQRMQ (117 aa). A coiled-coil region spans residues 48 to 92; sequence LDSSKDLKKKEKELQAMEAELNKRERELKRKEEAAAQAGIVIEDK. A run of 4 helical transmembrane segments spans residues 118-138, 148-168, 185-205, and 230-250; these read YLAFSSFLGLAACLFWNIIAT, VIIWLLAIIYFISGVPGAYVL, FGWFFLFYLIHIIFCVWAAVA, and IVGIFYFVGFGLFCLESLLSI. The Cytoplasmic portion of the chain corresponds to 251–282; the sequence is GVIQQVYMYFRGSGKAAEMKREAARGALSSAF.

Belongs to the SCAMP family.

It is found in the cell membrane. It localises to the cytoplasmic vesicle. The protein resides in the secretory vesicle membrane. Functionally, probably involved in membrane trafficking. This is Secretory carrier-associated membrane protein 3 (SCAMP3) from Oryza sativa subsp. japonica (Rice).